The sequence spans 679 residues: UvrABC system protein B (679 aa).

The Helicase ATP-binding domain occupies 31 to 414 (ENLTDGLAHQ…ELEKSGTEII (384 aa)). 44–51 (GVTGSGKT) is an ATP binding site. The Beta-hairpin motif lies at 97–120 (YYDYYQPEAYVPSSDTFIEKDASI). The Helicase C-terminal domain occupies 436–589 (QVDDLLSEAR…QIKYNEEHGI (154 aa)). In terms of domain architecture, UVR spans 639-674 (QQQIKKLEQQMYKFAQDLEFEKAAAIRDQLHQLREQ).

It belongs to the UvrB family. In terms of assembly, forms a heterotetramer with UvrA during the search for lesions. Interacts with UvrC in an incision complex.

Its subcellular location is the cytoplasm. In terms of biological role, the UvrABC repair system catalyzes the recognition and processing of DNA lesions. A damage recognition complex composed of 2 UvrA and 2 UvrB subunits scans DNA for abnormalities. Upon binding of the UvrA(2)B(2) complex to a putative damaged site, the DNA wraps around one UvrB monomer. DNA wrap is dependent on ATP binding by UvrB and probably causes local melting of the DNA helix, facilitating insertion of UvrB beta-hairpin between the DNA strands. Then UvrB probes one DNA strand for the presence of a lesion. If a lesion is found the UvrA subunits dissociate and the UvrB-DNA preincision complex is formed. This complex is subsequently bound by UvrC and the second UvrB is released. If no lesion is found, the DNA wraps around the other UvrB subunit that will check the other stand for damage. The sequence is that of UvrABC system protein B from Haemophilus influenzae (strain 86-028NP).